The chain runs to 455 residues: Proline--tRNA ligase (455 aa).

L-proline-binding residues include Thr101, Glu103, and Arg132. ATP contacts are provided by Arg132, Glu134, Gln216, and Thr219. His221 provides a ligand contact to L-proline. The ATP site is built by Ser253 and Arg255. An interaction with tRNA region spans residues 329–359; that stretch reads EIKGVPLRIEVGPKDIENKKITLFRRDTMEK.

Belongs to the class-II aminoacyl-tRNA synthetase family. ProS type 3 subfamily. As to quaternary structure, homodimer. The dimer is functionally asymmetric: only one of the two active sites at a time is able to form prolyl-adenylate, and only one tRNA molecule binds per dimer.

The protein localises to the cytoplasm. It catalyses the reaction tRNA(Pro) + L-proline + ATP = L-prolyl-tRNA(Pro) + AMP + diphosphate. Its activity is regulated as follows. Inhibited by high concentrations of prolinamide. Catalyzes the attachment of proline to tRNA(Pro) in a two-step reaction: proline is first activated by ATP to form Pro-AMP and then transferred to the acceptor end of tRNA(Pro). Can inadvertently accommodate and process non-cognate amino acids such as cysteine and alanine. This Methanocaldococcus jannaschii (strain ATCC 43067 / DSM 2661 / JAL-1 / JCM 10045 / NBRC 100440) (Methanococcus jannaschii) protein is Proline--tRNA ligase (proS).